A 757-amino-acid polypeptide reads, in one-letter code: RNA cytosine C(5)-methyltransferase NSUN2 (757 aa).

A disordered region spans residues 1–35 (MGRRARGRRFQQPPQPEGEEDASDGGRKRGQAGWE). A Phosphoserine modification is found at Ser-23. Lys-46 participates in a covalent cross-link: Glycyl lysine isopeptide (Lys-Gly) (interchain with G-Cter in SUMO2). Ser-139 bears the Phosphoserine; by AURKB mark. S-adenosyl-L-methionine is bound by residues 184–190 (CAAPGSK), Asp-215, Asp-242, and Asp-268. Cys-321 (nucleophile) is an active-site residue. A disordered region spans residues 436–504 (NKRQPKVQNK…EKKDGVCGPP (69 aa)). Phosphoserine is present on residues Ser-456 and Ser-473. Positions 463–476 (GNPSDQSELESQMI) are enriched in polar residues. Residues Lys-510 and Lys-515 each participate in a glycyl lysine isopeptide (Lys-Gly) (interchain with G-Cter in SUMO2) cross-link. Lys-585 is subject to N6-acetyllysine; alternate. Lys-585 bears the N6-malonyllysine; alternate mark. Residue Lys-585 forms a Glycyl lysine isopeptide (Lys-Gly) (interchain with G-Cter in SUMO2); alternate linkage. Ser-592 carries the phosphoserine modification. Glycyl lysine isopeptide (Lys-Gly) (interchain with G-Cter in SUMO2) cross-links involve residues Lys-639, Lys-653, and Lys-659. The interval 716–757 (LTNENAASPEQPGDEDAKQTAQDPCVPDSVPGCDAAAAEPSR) is disordered. At Thr-717 the chain carries Phosphothreonine. Residue Ser-723 is modified to Phosphoserine.

Belongs to the class I-like SAM-binding methyltransferase superfamily. RsmB/NOP family. TRM4 subfamily. Interacts with NPM1 and NCL during interphase; interaction is disrupted following phosphorylation at Ser-139. Post-translationally, phosphorylated at Ser-139 by AURKB during mitosis, leading to abolish methyltransferase activity and the interaction with NPM1. Ubiquitously expressed at low level. Up-regulated in tumors. Dynamically expressed during morphogenesis and in adult skin: in adult skin, expression is up-regulated in the bulge and hair germ as soon as the hair follicle enters its growing phase (anagen). During anagen, expressed at highest level in cells of the hair germ that give rise to the hair matrix.

It is found in the nucleus. It localises to the nucleolus. The protein resides in the cytoplasm. Its subcellular location is the mitochondrion. The protein localises to the cytoskeleton. It is found in the spindle. It localises to the secreted. The protein resides in the extracellular exosome. It catalyses the reaction cytidine(48) in tRNA + S-adenosyl-L-methionine = 5-methylcytidine(48) in tRNA + S-adenosyl-L-homocysteine + H(+). The catalysed reaction is cytidine(49) in tRNA + S-adenosyl-L-methionine = 5-methylcytidine(49) in tRNA + S-adenosyl-L-homocysteine + H(+). The enzyme catalyses cytidine(50) in tRNA + S-adenosyl-L-methionine = 5-methylcytidine(50) in tRNA + S-adenosyl-L-homocysteine + H(+). It carries out the reaction cytidine(34) in tRNA precursor + S-adenosyl-L-methionine = 5-methylcytidine(34) in tRNA precursor + S-adenosyl-L-homocysteine + H(+). It catalyses the reaction a cytidine in mRNA + S-adenosyl-L-methionine = a 5-methylcytidine in mRNA + S-adenosyl-L-homocysteine + H(+). Inhibited by magnesium ions. RNA cytosine C(5)-methyltransferase that methylates cytosine to 5-methylcytosine (m5C) in various RNAs, such as tRNAs, mRNAs and some long non-coding RNAs (lncRNAs). Involved in various processes, such as epidermal stem cell differentiation, testis differentiation and maternal to zygotic transition during early development: acts by increasing protein synthesis; cytosine C(5)-methylation promoting tRNA stability and preventing mRNA decay. Methylates cytosine to 5-methylcytosine (m5C) at positions 34 and 48 of intron-containing tRNA(Leu)(CAA) precursors, and at positions 48, 49 and 50 of tRNA(Gly)(GCC) precursors. tRNA methylation is required generation of RNA fragments derived from tRNAs (tRFs). Also mediates C(5)-methylation of mitochondrial tRNAs. Catalyzes cytosine C(5)-methylation of mRNAs, leading to stabilize them and prevent mRNA decay: mRNA stabilization involves YBX1 that specifically recognizes and binds m5C-modified transcripts. Cytosine C(5)-methylation of mRNAs also regulates mRNA export: methylated transcripts are specifically recognized by THOC4/ALYREF, which mediates mRNA nucleo-cytoplasmic shuttling. Also mediates cytosine C(5)-methylation of non-coding RNAs, such as vault RNAs (vtRNAs), promoting their processing into regulatory small RNAs. Cytosine C(5)-methylation of vtRNA VTRNA1.1 promotes its processing into small-vault RNA4 (svRNA4) and regulates epidermal differentiation. May act downstream of Myc to regulate epidermal cell growth and proliferation. Required for proper spindle assembly and chromosome segregation, independently of its methyltransferase activity. The sequence is that of RNA cytosine C(5)-methyltransferase NSUN2 from Mus musculus (Mouse).